The sequence spans 205 residues: Outer-membrane lipoprotein carrier protein (205 aa).

The first 19 residues, 1–19, serve as a signal peptide directing secretion; sequence MKKIIICFIFVFSINVSFA.

This sequence belongs to the LolA family. Monomer.

The protein localises to the periplasm. Participates in the translocation of lipoproteins from the inner membrane to the outer membrane. Only forms a complex with a lipoprotein if the residue after the N-terminal Cys is not an aspartate (The Asp acts as a targeting signal to indicate that the lipoprotein should stay in the inner membrane). This chain is Outer-membrane lipoprotein carrier protein, found in Francisella tularensis subsp. tularensis (strain FSC 198).